A 272-amino-acid chain; its full sequence is F-box protein PP2-B10 (272 aa).

One can recognise an F-box domain in the interval 11-57 (SSPFDSFPEDCISYIISFTNPRDACVAATVSKTFESTVKSDIIWEKF).

Part of a SCF (ASK-cullin-F-box) protein ligase complex. Interacts with SKP1B/ASK2, ASK11 and ASK12.

It participates in protein modification; protein ubiquitination. Component of SCF(ASK-cullin-F-box) E3 ubiquitin ligase complexes, which may mediate the ubiquitination and subsequent proteasomal degradation of target proteins. The sequence is that of F-box protein PP2-B10 (PP2B10) from Arabidopsis thaliana (Mouse-ear cress).